The following is a 329-amino-acid chain: L-lactate dehydrogenase (329 aa).

NAD(+)-binding positions include valine 18, glutamate 39, lysine 46, tyrosine 71, and 85–86 (GA). Residues glutamine 88 and arginine 94 each coordinate substrate. NAD(+) is bound by residues serine 107, 124-126 (AAN), and serine 149. 126 to 129 (NPVD) provides a ligand contact to substrate. Residue 154 to 157 (DSAR) coordinates substrate. Beta-D-fructose 1,6-bisphosphate is bound by residues arginine 159 and histidine 174. Histidine 181 serves as the catalytic Proton acceptor. Residue tyrosine 226 is modified to Phosphotyrosine. Threonine 235 lines the substrate pocket.

Belongs to the LDH/MDH superfamily. LDH family. In terms of assembly, homotetramer.

It is found in the cytoplasm. The enzyme catalyses (S)-lactate + NAD(+) = pyruvate + NADH + H(+). It participates in fermentation; pyruvate fermentation to lactate; (S)-lactate from pyruvate: step 1/1. With respect to regulation, allosterically activated by fructose 1,6-bisphosphate (FBP). In terms of biological role, catalyzes the conversion of lactate to pyruvate. In Streptococcus equinus (Streptococcus bovis), this protein is L-lactate dehydrogenase.